The sequence spans 142 residues: Large ribosomal subunit protein uL13 (142 aa).

This sequence belongs to the universal ribosomal protein uL13 family. Part of the 50S ribosomal subunit.

Functionally, this protein is one of the early assembly proteins of the 50S ribosomal subunit, although it is not seen to bind rRNA by itself. It is important during the early stages of 50S assembly. The protein is Large ribosomal subunit protein uL13 of Maridesulfovibrio salexigens (strain ATCC 14822 / DSM 2638 / NCIMB 8403 / VKM B-1763) (Desulfovibrio salexigens).